Consider the following 1070-residue polypeptide: DNA-directed RNA polymerase subunit beta (1070 aa).

It belongs to the RNA polymerase beta chain family. As to quaternary structure, in plastids the minimal PEP RNA polymerase catalytic core is composed of four subunits: alpha, beta, beta', and beta''. When a (nuclear-encoded) sigma factor is associated with the core the holoenzyme is formed, which can initiate transcription.

It is found in the plastid. Its subcellular location is the chloroplast. The enzyme catalyses RNA(n) + a ribonucleoside 5'-triphosphate = RNA(n+1) + diphosphate. DNA-dependent RNA polymerase catalyzes the transcription of DNA into RNA using the four ribonucleoside triphosphates as substrates. This Solanum tuberosum (Potato) protein is DNA-directed RNA polymerase subunit beta.